The sequence spans 1029 residues: Carbamoyl phosphate synthase large chain (1029 aa).

The tract at residues 1–402 is carboxyphosphate synthetic domain; it reads MPKRTDLQTI…SLQKALRSTE (402 aa). Positions 129, 169, 175, 176, 208, 210, 215, 241, 242, 243, 285, and 299 each coordinate ATP. An ATP-grasp 1 domain is found at 133 to 328; sequence QAAMKKIGVE…IAKIAALLAV (196 aa). Mg(2+) contacts are provided by Gln285, Glu299, and Asn301. 3 residues coordinate Mn(2+): Gln285, Glu299, and Asn301. An oligomerization domain region spans residues 403–544; sequence SDIRGVYAEM…YHYSTYEWED (142 aa). Residues 545-929 are carbamoyl phosphate synthetic domain; it reads EVTGTDKPKV…AFYRAQLGAK (385 aa). In terms of domain architecture, ATP-grasp 2 spans 671–863; the sequence is NALCERLGLS…LAKSAARIAV (193 aa). Arg707, Gln747, Leu749, Glu754, Gly779, Val780, His781, Ser782, Gln822, and Glu834 together coordinate ATP. The Mg(2+) site is built by Gln822, Glu834, and Asn836. Mn(2+) is bound by residues Gln822, Glu834, and Asn836. Positions 930-1028 constitute an MGS-like domain; it reads SYLPLSGTAL…QDWQTQEAVA (99 aa). An allosteric domain region spans residues 930 to 1029; sequence SYLPLSGTAL…DWQTQEAVAG (100 aa).

This sequence belongs to the CarB family. As to quaternary structure, composed of two chains; the small (or glutamine) chain promotes the hydrolysis of glutamine to ammonia, which is used by the large (or ammonia) chain to synthesize carbamoyl phosphate. Tetramer of heterodimers (alpha,beta)4. The cofactor is Mg(2+). Requires Mn(2+) as cofactor.

The catalysed reaction is hydrogencarbonate + L-glutamine + 2 ATP + H2O = carbamoyl phosphate + L-glutamate + 2 ADP + phosphate + 2 H(+). It carries out the reaction hydrogencarbonate + NH4(+) + 2 ATP = carbamoyl phosphate + 2 ADP + phosphate + 2 H(+). It functions in the pathway amino-acid biosynthesis; L-arginine biosynthesis; carbamoyl phosphate from bicarbonate: step 1/1. It participates in pyrimidine metabolism; UMP biosynthesis via de novo pathway; (S)-dihydroorotate from bicarbonate: step 1/3. Its function is as follows. Large subunit of the glutamine-dependent carbamoyl phosphate synthetase (CPSase). CPSase catalyzes the formation of carbamoyl phosphate from the ammonia moiety of glutamine, carbonate, and phosphate donated by ATP, constituting the first step of 2 biosynthetic pathways, one leading to arginine and/or urea and the other to pyrimidine nucleotides. The large subunit (synthetase) binds the substrates ammonia (free or transferred from glutamine from the small subunit), hydrogencarbonate and ATP and carries out an ATP-coupled ligase reaction, activating hydrogencarbonate by forming carboxy phosphate which reacts with ammonia to form carbamoyl phosphate. This Deinococcus deserti (strain DSM 17065 / CIP 109153 / LMG 22923 / VCD115) protein is Carbamoyl phosphate synthase large chain.